An 839-amino-acid chain; its full sequence is LPS-assembly protein LptD (839 aa).

A signal peptide spans 1–21 (MAIGITACVLSLINYQGLAYS).

Belongs to the LptD family. In terms of assembly, component of the lipopolysaccharide transport and assembly complex. Interacts with LptE and LptA.

It localises to the cell outer membrane. Functionally, together with LptE, is involved in the assembly of lipopolysaccharide (LPS) at the surface of the outer membrane. The chain is LPS-assembly protein LptD from Legionella pneumophila (strain Paris).